Reading from the N-terminus, the 313-residue chain is Biotin synthase (313 aa).

A Radical SAM core domain is found at 28–258 (NFGNDIELCS…LFPQARLRLS (231 aa)). [4Fe-4S] cluster is bound by residues Cys46, Cys50, and Cys53. Positions 90, 121, 181, and 256 each coordinate [2Fe-2S] cluster.

It belongs to the radical SAM superfamily. Biotin synthase family. As to quaternary structure, homodimer. It depends on [4Fe-4S] cluster as a cofactor. [2Fe-2S] cluster is required as a cofactor.

It carries out the reaction (4R,5S)-dethiobiotin + (sulfur carrier)-SH + 2 reduced [2Fe-2S]-[ferredoxin] + 2 S-adenosyl-L-methionine = (sulfur carrier)-H + biotin + 2 5'-deoxyadenosine + 2 L-methionine + 2 oxidized [2Fe-2S]-[ferredoxin]. Its pathway is cofactor biosynthesis; biotin biosynthesis; biotin from 7,8-diaminononanoate: step 2/2. In terms of biological role, catalyzes the conversion of dethiobiotin (DTB) to biotin by the insertion of a sulfur atom into dethiobiotin via a radical-based mechanism. In Francisella tularensis subsp. tularensis (strain FSC 198), this protein is Biotin synthase.